The primary structure comprises 258 residues: Imidazole glycerol phosphate synthase subunit HisF (258 aa).

Active-site residues include aspartate 12 and aspartate 131.

This sequence belongs to the HisA/HisF family. In terms of assembly, heterodimer of HisH and HisF.

The protein localises to the cytoplasm. It carries out the reaction 5-[(5-phospho-1-deoxy-D-ribulos-1-ylimino)methylamino]-1-(5-phospho-beta-D-ribosyl)imidazole-4-carboxamide + L-glutamine = D-erythro-1-(imidazol-4-yl)glycerol 3-phosphate + 5-amino-1-(5-phospho-beta-D-ribosyl)imidazole-4-carboxamide + L-glutamate + H(+). It functions in the pathway amino-acid biosynthesis; L-histidine biosynthesis; L-histidine from 5-phospho-alpha-D-ribose 1-diphosphate: step 5/9. IGPS catalyzes the conversion of PRFAR and glutamine to IGP, AICAR and glutamate. The HisF subunit catalyzes the cyclization activity that produces IGP and AICAR from PRFAR using the ammonia provided by the HisH subunit. This is Imidazole glycerol phosphate synthase subunit HisF from Paenarthrobacter aurescens (strain TC1).